Consider the following 391-residue polypeptide: Probable FAD-dependent oxidoreductase PA4991 (391 aa).

FAD-binding positions include alanine 17, glutamate 36, 44–45 (QS), 49–51 (QGI), and 346–347 (LA).

It belongs to the DAO family. In terms of assembly, monomer. FAD is required as a cofactor.

In terms of biological role, probably functions as a FAD-dependent oxidoreductase, whose physiological substrate is unknown. Does not display amino-acid oxidase or glycerol-3-phosphate dehydrogenase activities. Is essential for growth of P.aeruginosa in the sputum of cystic fibrosis patients. This is Probable FAD-dependent oxidoreductase PA4991 from Pseudomonas aeruginosa (strain ATCC 15692 / DSM 22644 / CIP 104116 / JCM 14847 / LMG 12228 / 1C / PRS 101 / PAO1).